Here is a 172-residue protein sequence, read N- to C-terminus: 3-phenylpropionate/cinnamic acid dioxygenase subunit beta (172 aa).

This sequence belongs to the bacterial ring-hydroxylating dioxygenase beta subunit family. In terms of assembly, this dioxygenase system consists of four proteins: the two subunits of the hydroxylase component (HcaE and HcaF), a ferredoxin (HcaC) and a ferredoxin reductase (HcaD).

It catalyses the reaction 3-phenylpropanoate + NADH + O2 + H(+) = 3-(cis-5,6-dihydroxycyclohexa-1,3-dien-1-yl)propanoate + NAD(+). The catalysed reaction is (E)-cinnamate + NADH + O2 + H(+) = (2E)-3-(cis-5,6-dihydroxycyclohexa-1,3-dien-1-yl)prop-2-enoate + NAD(+). It functions in the pathway aromatic compound metabolism; 3-phenylpropanoate degradation. Part of the multicomponent 3-phenylpropionate dioxygenase. Converts 3-phenylpropionic acid (PP) and cinnamic acid (CI) into 3-phenylpropionate-dihydrodiol (PP-dihydrodiol) and cinnamic acid-dihydrodiol (CI-dihydrodiol), respectively. The polypeptide is 3-phenylpropionate/cinnamic acid dioxygenase subunit beta (Shigella sonnei (strain Ss046)).